The chain runs to 344 residues: S-methyl-5'-thioadenosine phosphorylase (344 aa).

Phosphate contacts are provided by residues threonine 45, 88–89 (RH), and 121–122 (SA). A substrate-binding site is contributed by methionine 238. Phosphate is bound at residue serine 239. Position 262–264 (262–264 (DYD)) interacts with substrate.

Belongs to the PNP/MTAP phosphorylase family. MTAP subfamily. As to quaternary structure, homotrimer.

The protein resides in the cytoplasm. It localises to the nucleus. The enzyme catalyses S-methyl-5'-thioadenosine + phosphate = 5-(methylsulfanyl)-alpha-D-ribose 1-phosphate + adenine. Its pathway is amino-acid biosynthesis; L-methionine biosynthesis via salvage pathway; S-methyl-5-thio-alpha-D-ribose 1-phosphate from S-methyl-5'-thioadenosine (phosphorylase route): step 1/1. Functionally, catalyzes the reversible phosphorylation of S-methyl-5'-thioadenosine (MTA) to adenine and 5-methylthioribose-1-phosphate. Involved in the breakdown of MTA, a major by-product of polyamine biosynthesis. Responsible for the first step in the methionine salvage pathway after MTA has been generated from S-adenosylmethionine. Has broad substrate specificity with 6-aminopurine nucleosides as preferred substrates. The protein is S-methyl-5'-thioadenosine phosphorylase of Candida albicans (strain SC5314 / ATCC MYA-2876) (Yeast).